The chain runs to 357 residues: Eukaryotic translation initiation factor 3 subunit F (357 aa).

The MPN domain occupies 30–169 (VHIQPQAVFS…TKAYISAPVA (140 aa)). The tract at residues 309-357 (VGGDKEGGEKGKDGEDGGRGGRGGKRGGGGRGGHRGEPREPREPREPAE) is disordered. 2 stretches are compositionally biased toward basic and acidic residues: residues 311-327 (GDKE…DGGR) and 342-357 (HRGE…EPAE).

It belongs to the eIF-3 subunit F family. In terms of assembly, component of the eukaryotic translation initiation factor 3 (eIF-3) complex.

The protein resides in the cytoplasm. Functionally, component of the eukaryotic translation initiation factor 3 (eIF-3) complex, which is involved in protein synthesis of a specialized repertoire of mRNAs and, together with other initiation factors, stimulates binding of mRNA and methionyl-tRNAi to the 40S ribosome. The eIF-3 complex specifically targets and initiates translation of a subset of mRNAs involved in cell proliferation. This chain is Eukaryotic translation initiation factor 3 subunit F, found in Chaetomium globosum (strain ATCC 6205 / CBS 148.51 / DSM 1962 / NBRC 6347 / NRRL 1970) (Soil fungus).